A 37-amino-acid chain; its full sequence is MKVKPSVKQICEKCKVIRRNGRVMVICENPRHKQRQG.

The protein belongs to the bacterial ribosomal protein bL36 family.

This Arthrobacter sp. (strain FB24) protein is Large ribosomal subunit protein bL36A.